We begin with the raw amino-acid sequence, 1379 residues long: Hepatocyte growth factor receptor (1379 aa).

The first 24 residues, 1 to 24, serve as a signal peptide directing secretion; the sequence is MKAPTVLAPGILVLLLSLVQRSHG. The Extracellular portion of the chain corresponds to 25 to 931; that stretch reads ECKEALVKSE…VIVQPDQNFA (907 aa). Residues 27–514 enclose the Sema domain; sequence KEALVKSEMN…TGKKITKIPL (488 aa). The N-linked (GlcNAc...) asparagine glycan is linked to Asn-45. Cystine bridges form between Cys-95–Cys-101, Cys-98–Cys-160, Cys-133–Cys-141, and Cys-171–Cys-174. N-linked (GlcNAc...) asparagine glycosylation is present at Asn-106. Residues Asn-201 and Asn-357 are each glycosylated (N-linked (GlcNAc...) asparagine). Intrachain disulfides connect Cys-297–Cys-362 and Cys-384–Cys-396. Residues Asn-398 and Asn-404 are each glycosylated (N-linked (GlcNAc...) asparagine). Cystine bridges form between Cys-519/Cys-537, Cys-525/Cys-560, Cys-528/Cys-544, and Cys-540/Cys-550. IPT/TIG domains are found at residues 562–654, 656–738, and 741–835; these read PAVY…FSYV, PVIT…FSYR, and PVVY…LTYV. An O-linked (Man) threonine glycan is attached at Thr-581. N-linked (GlcNAc...) asparagine glycosylation is found at Asn-606 and Asn-634. O-linked (Man) threonine glycosylation is found at Thr-675 and Thr-760. Asn-784 and Asn-878 each carry an N-linked (GlcNAc...) asparagine glycan. A helical transmembrane segment spans residues 932–954; sequence GLIIGAVSISVVVLLLSGLFLWM. At 955 to 1379 the chain is on the cytoplasmic side; it reads RKRKHKDLGS…QDNIDGEGNT (425 aa). Ser-964 is subject to Phosphoserine. Thr-975 is subject to Phosphothreonine. Phosphoserine occurs at positions 988, 995, and 998. Tyr-1001 bears the Phosphotyrosine mark. The 268-residue stretch at 1076 to 1343 folds into the Protein kinase domain; the sequence is VHFNEVIGRG…RISSIFSTFI (268 aa). ATP contacts are provided by residues 1082 to 1090 and Lys-1108; that span reads IGRGHFGCV. Asp-1202 functions as the Proton acceptor in the catalytic mechanism. Residues 1210–1379 form an interaction with RANBP9 region; that stretch reads LDEKFTVKVA…QDNIDGEGNT (170 aa). A Phosphotyrosine modification is found at Tyr-1228. Phosphotyrosine; by autocatalysis is present on residues Tyr-1232 and Tyr-1233. Position 1287 is a phosphothreonine (Thr-1287). The segment at 1318-1357 is interaction with MUC20; the sequence is WHPKAEMRPSFSELVSRISSIFSTFIGEHYVHVNATYVNV. A phosphotyrosine; by autocatalysis mark is found at Tyr-1347 and Tyr-1354. Tyr-1363 bears the Phosphotyrosine mark.

It belongs to the protein kinase superfamily. Tyr protein kinase family. As to quaternary structure, heterodimer made of an alpha chain (50 kDa) and a beta chain (145 kDa) which are disulfide linked. Binds PLXNB1. Interacts when phosphorylated with downstream effectors including STAT3, PIK3R1, SRC, PCLG1, GRB2 and GAB1. When phosphorylated at Tyr-1354, interacts with INPPL1/SHIP2. Interacts with RANBP9 and RANBP10. Interacts with INPP5D/SHIP1. Interacts with SPSB1, SPSB2, SPSB4 and probably SPSB3. SPSB1 binding occurs in the presence and in the absence of HGF, however HGF treatment has a positive effect on this interaction. Interacts with MUC20; prevents interaction with GRB2 and suppresses hepatocyte growth factor-induced cell proliferation. Interacts with GRB10. Interacts with PTPN1 and PTPN2. Interacts with HSP90AA1 and HSP90AB1; the interaction suppresses MET kinase activity. Interacts with tensin TNS3. Interacts (when phosphorylated) with tensin TNS4 (via SH2 domain); the interaction increases MET protein stability by inhibiting MET endocytosis and subsequent lysosomal degradation. In terms of assembly, (Microbial infection) Interacts with L.monocytogenes InlB. InlB probably dimerizes upon binding to MET, which encourages subsequent dimerization of MET. In terms of processing, autophosphorylated in response to ligand binding on Tyr-1232 and Tyr-1233 in the kinase domain leading to further phosphorylation of Tyr-1347 and Tyr-1354 in the C-terminal multifunctional docking site. Dephosphorylated by PTPRJ at Tyr-1347 and Tyr-1363. Dephosphorylated by PTPN1 and PTPN2. Ubiquitinated. Ubiquitination by CBL regulates MET endocytosis, resulting in decreasing plasma membrane receptor abundance, and in endosomal degradation and/or recycling of internalized receptors. Post-translationally, O-mannosylation of IPT/TIG domains by TMEM260 is required for protein maturation. O-mannosylated residues are composed of single mannose glycans that are not elongated or modified. In terms of processing, (Microbial infection) Tyrosine phosphorylation is stimulated by L.monocytogenes InlB.

It is found in the membrane. It catalyses the reaction L-tyrosyl-[protein] + ATP = O-phospho-L-tyrosyl-[protein] + ADP + H(+). Its activity is regulated as follows. In its inactive state, the C-terminal tail interacts with the catalytic domain and inhibits the kinase activity. Upon ligand binding, the C-terminal tail is displaced and becomes phosphorylated, thus increasing the kinase activity. Receptor tyrosine kinase that transduces signals from the extracellular matrix into the cytoplasm by binding to hepatocyte growth factor/HGF ligand. Regulates many physiological processes including proliferation, scattering, morphogenesis and survival. Ligand binding at the cell surface induces autophosphorylation of MET on its intracellular domain that provides docking sites for downstream signaling molecules. Following activation by ligand, interacts with the PI3-kinase subunit PIK3R1, PLCG1, SRC, GRB2, STAT3 or the adapter GAB1. Recruitment of these downstream effectors by MET leads to the activation of several signaling cascades including the RAS-ERK, PI3 kinase-AKT, or PLCgamma-PKC. The RAS-ERK activation is associated with the morphogenetic effects while PI3K/AKT coordinates prosurvival effects. During embryonic development, MET signaling plays a role in gastrulation, development and migration of neuronal precursors, angiogenesis and kidney formation. During skeletal muscle development, it is crucial for the migration of muscle progenitor cells and for the proliferation of secondary myoblasts. In adults, participates in wound healing as well as organ regeneration and tissue remodeling. Also promotes differentiation and proliferation of hematopoietic cells. May regulate cortical bone osteogenesis. In terms of biological role, (Microbial infection) Acts as a receptor for Listeria monocytogenes internalin InlB, mediating entry of the pathogen into cells. In Mus musculus (Mouse), this protein is Hepatocyte growth factor receptor (Met).